The sequence spans 137 residues: Large ribosomal subunit protein uL16 (137 aa).

The segment covering methionine 1–glutamine 13 has biased composition (basic residues). The disordered stretch occupies residues methionine 1 to threonine 22.

It belongs to the universal ribosomal protein uL16 family. Part of the 50S ribosomal subunit.

Functionally, binds 23S rRNA and is also seen to make contacts with the A and possibly P site tRNAs. The protein is Large ribosomal subunit protein uL16 of Polynucleobacter asymbioticus (strain DSM 18221 / CIP 109841 / QLW-P1DMWA-1) (Polynucleobacter necessarius subsp. asymbioticus).